The chain runs to 676 residues: Methionine--tRNA ligase (676 aa).

Positions 15-25 (PYANGPIHLGH) match the 'HIGH' region motif. The Zn(2+) site is built by Cys-146, Cys-149, Cys-159, and Cys-162. Positions 332–336 (KMSKS) match the 'KMSKS' region motif. Lys-335 contributes to the ATP binding site. One can recognise a tRNA-binding domain in the interval 575–676 (DFAKIDLRIA…EGAQPGMRVK (102 aa)).

Belongs to the class-I aminoacyl-tRNA synthetase family. MetG type 1 subfamily. In terms of assembly, homodimer. Zn(2+) is required as a cofactor.

It localises to the cytoplasm. It catalyses the reaction tRNA(Met) + L-methionine + ATP = L-methionyl-tRNA(Met) + AMP + diphosphate. Functionally, is required not only for elongation of protein synthesis but also for the initiation of all mRNA translation through initiator tRNA(fMet) aminoacylation. The protein is Methionine--tRNA ligase of Shewanella sp. (strain MR-7).